The primary structure comprises 387 residues: Putative actin-29 (387 aa).

This sequence belongs to the actin family.

The protein resides in the cytoplasm. The protein localises to the cytoskeleton. The enzyme catalyses ATP + H2O = ADP + phosphate + H(+). Actins are highly conserved proteins that are involved in various types of cell motility and are ubiquitously expressed in all eukaryotic cells. Multiple isoforms are involved in various cellular functions such as cytoskeleton structure, cell mobility, chromosome movement and muscle contraction. This chain is Putative actin-29 (act29), found in Dictyostelium discoideum (Social amoeba).